Reading from the N-terminus, the 465-residue chain is Glutathione reductase (465 aa).

Positions 16 and 17 each coordinate FAD. Ser16 provides a ligand contact to glutathione. Glutathione is bound at residue Arg23. The FAD site is built by Glu42, Thr49, Cys50, and Lys58. Cysteines 50 and 55 form a disulfide. Residue Tyr108 participates in glutathione binding. FAD is bound at residue Gly124. NADP(+) contacts are provided by Ala187, Ile190, Glu193, Arg210, Arg216, and Gly276. Asp318 contacts FAD. Leu324 is a binding site for NADP(+). Position 326 (Thr326) interacts with FAD. Arg334 is a binding site for glutathione. Residue Val357 participates in NADP(+) binding. His454 is an FAD binding site. Catalysis depends on His454, which acts as the Proton acceptor.

The protein belongs to the class-I pyridine nucleotide-disulfide oxidoreductase family. FAD serves as cofactor.

The protein resides in the cytoplasm. It catalyses the reaction 2 glutathione + NADP(+) = glutathione disulfide + NADPH + H(+). In terms of biological role, catalyzes the reduction of glutathione disulfide (GSSG) to reduced glutathione (GSH). Constitutes the major mechanism to maintain a high GSH:GSSG ratio in the cytosol. The amount of GSH may affect the determination of cell fate. This Dictyostelium discoideum (Social amoeba) protein is Glutathione reductase (gsr).